A 370-amino-acid chain; its full sequence is Cobalt-precorrin-5B C(1)-methyltransferase (370 aa).

The protein belongs to the CbiD family.

The catalysed reaction is Co-precorrin-5B + S-adenosyl-L-methionine = Co-precorrin-6A + S-adenosyl-L-homocysteine. It participates in cofactor biosynthesis; adenosylcobalamin biosynthesis; cob(II)yrinate a,c-diamide from sirohydrochlorin (anaerobic route): step 6/10. Functionally, catalyzes the methylation of C-1 in cobalt-precorrin-5B to form cobalt-precorrin-6A. The polypeptide is Cobalt-precorrin-5B C(1)-methyltransferase (Prochlorococcus marinus (strain MIT 9312)).